The sequence spans 278 residues: Putative phosphoenolpyruvate synthase regulatory protein (278 aa).

158–165 lines the ADP pocket; that stretch reads GVSRSGKT.

Belongs to the pyruvate, phosphate/water dikinase regulatory protein family. PSRP subfamily.

It catalyses the reaction [pyruvate, water dikinase] + ADP = [pyruvate, water dikinase]-phosphate + AMP + H(+). The catalysed reaction is [pyruvate, water dikinase]-phosphate + phosphate + H(+) = [pyruvate, water dikinase] + diphosphate. In terms of biological role, bifunctional serine/threonine kinase and phosphorylase involved in the regulation of the phosphoenolpyruvate synthase (PEPS) by catalyzing its phosphorylation/dephosphorylation. The chain is Putative phosphoenolpyruvate synthase regulatory protein from Acinetobacter baylyi (strain ATCC 33305 / BD413 / ADP1).